A 179-amino-acid chain; its full sequence is Large ribosomal subunit protein uL5 (179 aa).

It belongs to the universal ribosomal protein uL5 family. In terms of assembly, part of the 50S ribosomal subunit; part of the 5S rRNA/L5/L18/L25 subcomplex. Contacts the 5S rRNA and the P site tRNA. Forms a bridge to the 30S subunit in the 70S ribosome.

In terms of biological role, this is one of the proteins that bind and probably mediate the attachment of the 5S RNA into the large ribosomal subunit, where it forms part of the central protuberance. In the 70S ribosome it contacts protein S13 of the 30S subunit (bridge B1b), connecting the 2 subunits; this bridge is implicated in subunit movement. Contacts the P site tRNA; the 5S rRNA and some of its associated proteins might help stabilize positioning of ribosome-bound tRNAs. The chain is Large ribosomal subunit protein uL5 from Dichelobacter nodosus (strain VCS1703A).